We begin with the raw amino-acid sequence, 969 residues long: Surface protein P113 (969 aa).

The first 22 residues, 1–22 (MKIPFFILHILLLQFLLCLIRC), serve as a signal peptide directing secretion. N-linked (GlcNAc...) asparagine glycosylation occurs at asparagine 207. Positions 223–328 (IGDESTDSSS…TDTLVNNKEN (106 aa)) are disordered. Polar residues predominate over residues 229–241 (DSSSMEIQDSTSN). Asparagine 268 carries N-linked (GlcNAc...) asparagine glycosylation. Residues 300–311 (KNEDNKDLEHGS) are compositionally biased toward basic and acidic residues. The span at 312–325 (SNDVNNNTDTLVNN) shows a compositional bias: low complexity. N-linked (GlcNAc...) asparagine glycans are attached at residues asparagine 317, asparagine 360, asparagine 661, and asparagine 697. Over residues 688–705 (SSNFNIFDSNNTDQNNEQ) the composition is skewed to polar residues. Residues 688-947 (SSNFNIFDSN…NETNKTDNGS (260 aa)) are disordered. Residues 713–727 (QLLNNNNDDVLSESN) are compositionally biased toward low complexity. The span at 728 to 749 (NENKEKTSDDATHKETQEKSDQ) shows a compositional bias: basic and acidic residues. N-linked (GlcNAc...) asparagine glycosylation is present at asparagine 779. Residues 798-811 (EGTEELQQNDEDAE) show a composition bias toward acidic residues. Basic and acidic residues predominate over residues 812–822 (SLTKENSKSEE). Residues 823–841 (QENEDSTDAEAIDKEEVET) are compositionally biased toward acidic residues. Residues 842–854 (EEKGKDEQKKDEQ) are compositionally biased toward basic and acidic residues. Positions 855–864 (KEQDEEEDGE) are enriched in acidic residues. Asparagine 876 carries N-linked (GlcNAc...) asparagine glycosylation. Residues 883–896 (EENKNEVKGEEHLQ) show a composition bias toward basic and acidic residues. The span at 897-907 (GSEQSIEASES) shows a compositional bias: low complexity. Residues 908 to 917 (SQKDETKETE) are compositionally biased toward basic and acidic residues. Positions 918 to 936 (DKEEYVNANDDESSEEDTT) are enriched in acidic residues. Positions 937 to 947 (PNETNKTDNGS) are enriched in polar residues. 3 N-linked (GlcNAc...) asparagine glycosylation sites follow: asparagine 938, asparagine 941, and asparagine 945. Asparagine 945 carries the GPI-anchor amidated asparagine lipid modification. The propeptide at 946 to 969 (GSSFFFAMSNALLVILLLLFIEFL) is removed in mature form.

In terms of assembly, forms a complex composed of RH5, P113 and human BSG/basigin; the complex bridges the merozoite and host erythrocyte membranes. Within the complex, interacts with RH5 (via N-terminus); the interaction tethers RH5 to the merozoite membrane.

The protein localises to the cell membrane. In terms of biological role, membrane receptor which tethers secreted RH5 to the merozoite membrane during merozoite invasion of host erythocytes. In Plasmodium falciparum (isolate 3D7), this protein is Surface protein P113.